Consider the following 113-residue polypeptide: Heavy metal-associated isoprenylated plant protein 15 (113 aa).

The region spanning 1–65 is the HMA domain; sequence MIVWMGVYDQ…KWGKAKLTLY (65 aa). Residues 69 to 89 adopt a coiled-coil conformation; that stretch reads DALKEAKIAEAKQKREEIERE. Position 110 is a cysteine methyl ester (C110). The S-farnesyl cysteine moiety is linked to residue C110. Positions 111 to 113 are cleaved as a propeptide — removed in mature form; sequence VIC.

The protein belongs to the HIPP family. Expressed in embryo sacs.

Its function is as follows. Probable heavy-metal-binding protein. The sequence is that of Heavy metal-associated isoprenylated plant protein 15 from Arabidopsis thaliana (Mouse-ear cress).